A 290-amino-acid chain; its full sequence is 33 kDa chaperonin (290 aa).

Disulfide bonds link Cys235–Cys237 and Cys268–Cys271.

This sequence belongs to the HSP33 family. In terms of processing, under oxidizing conditions two disulfide bonds are formed involving the reactive cysteines. Under reducing conditions zinc is bound to the reactive cysteines and the protein is inactive.

It is found in the cytoplasm. Redox regulated molecular chaperone. Protects both thermally unfolding and oxidatively damaged proteins from irreversible aggregation. Plays an important role in the bacterial defense system toward oxidative stress. The protein is 33 kDa chaperonin of Streptococcus pneumoniae serotype 19F (strain G54).